Here is a 373-residue protein sequence, read N- to C-terminus: Leucine aminopeptidase 1 (373 aa).

The signal sequence occupies residues 1–18; the sequence is MKLLSVLALSATATSVLG. Zn(2+) contacts are provided by H176 and D195. An N-linked (GlcNAc...) asparagine glycan is attached at N196. Zn(2+)-binding residues include E234 and D261. A glycan (N-linked (GlcNAc...) asparagine) is linked at N288. C310 and C314 form a disulfide bridge. H343 contributes to the Zn(2+) binding site. A glycan (N-linked (GlcNAc...) asparagine) is linked at N348.

It belongs to the peptidase M28 family. M28E subfamily. As to quaternary structure, monomer. It depends on Zn(2+) as a cofactor.

The protein localises to the secreted. Activity is inhibited by EDTA, o-phenanthroline, bestatin and amastatin. Extracellular aminopeptidase which contributes to pathogenicity. The polypeptide is Leucine aminopeptidase 1 (LAP1) (Trichophyton rubrum (Athlete's foot fungus)).